Here is a 188-residue protein sequence, read N- to C-terminus: MARIIRRPLNLTAAVRFRLSPLSPFSGNSGSINSETTSWSELIRVPSLVEGCDYKHWLVLMKPPNGYPTRNHIVQSFVETLAMALGSEEEAKRSIYSVSTKYYYAFGCRIHEPLTYKIRSLPDVKWVLPDSFIVDGDNRYGGEPFVDGEVVPYDEKYHADWLRDQTDEDAKSGVVKKKHRRKRKKKLI.

The transit peptide at 1 to 20 directs the protein to the mitochondrion; the sequence is MARIIRRPLNLTAAVRFRLS. Positions 169–188 are disordered; sequence DAKSGVVKKKHRRKRKKKLI. A compositionally biased stretch (basic residues) spans 174–188; sequence VVKKKHRRKRKKKLI.

Belongs to the MORF family. In terms of assembly, heterodimers with MORF8/RIP1, MORF5/RIP5 and MORF6/RIP6.

The protein localises to the mitochondrion. In terms of biological role, involved in organellar RNA editing. Required for the processing of few RNA editing sites in mitochondria. The polypeptide is Multiple organellar RNA editing factor 7, mitochondrial (Arabidopsis thaliana (Mouse-ear cress)).